We begin with the raw amino-acid sequence, 138 residues long: Histone H2B (138 aa).

A compositionally biased stretch (basic and acidic residues) spans 1–10 (MPPKAAEKKP). The interval 1-47 (MPPKAAEKKPSTAGKAPAGKAPEKKEAGKKTTAAGGEKKKRSKTRKE) is disordered. 2 positions are modified to N6-acetyllysine; alternate: lysine 8 and lysine 9. Residues lysine 8 and lysine 9 each participate in a glycyl lysine isopeptide (Lys-Gly) (interchain with G-Cter in SUMO); alternate cross-link. Residues 11-20 (STAGKAPAGK) are compositionally biased toward low complexity. Lysine 15 bears the N6-acetyllysine mark. Lysine 24 is modified (N6-acetyllysine; alternate). A Glycyl lysine isopeptide (Lys-Gly) (interchain with G-Cter in SUMO); alternate cross-link involves residue lysine 24. Lysine 25 participates in a covalent cross-link: Glycyl lysine isopeptide (Lys-Gly) (interchain with G-Cter in SUMO). Lysine 132 participates in a covalent cross-link: Glycyl lysine isopeptide (Lys-Gly) (interchain with G-Cter in ubiquitin).

It belongs to the histone H2B family. As to quaternary structure, the nucleosome is a histone octamer containing two molecules each of H2A, H2B, H3 and H4 assembled in one H3-H4 heterotetramer and two H2A-H2B heterodimers. The octamer wraps approximately 147 bp of DNA. Post-translationally, monoubiquitinated to form H2BK123ub1. H2BK123ub1 gives a specific tag for epigenetic transcriptional activation and is also prerequisite for H3K4me and H3K79me formation. H2BK123ub1 also modulates the formation of double-strand breaks during meiosis and is a prerequisite for DNA-damage checkpoint activation. In terms of processing, acetylated by GCN5 to form H2BK11ac and H2BK16ac. H2BK16ac can also be formed by ESA1. Acetylation of N-terminal lysines and particularly formation of H2BK11acK16ac has a positive effect on transcription. Sumoylation to form H2BK6su or H2BK7su, and probably also H2BK16su or H2BK17su, occurs preferentially near the telomeres and represses gene transcription.

The protein resides in the nucleus. It localises to the chromosome. Functionally, core component of nucleosome. Nucleosomes wrap and compact DNA into chromatin, limiting DNA accessibility to the cellular machineries which require DNA as a template. Histones thereby play a central role in transcription regulation, DNA repair, DNA replication and chromosomal stability. DNA accessibility is regulated via a complex set of post-translational modifications of histones, also called histone code, and nucleosome remodeling. This chain is Histone H2B (HTB1), found in Ajellomyces capsulatus (Darling's disease fungus).